We begin with the raw amino-acid sequence, 122 residues long: Big defensin (122 aa).

Positions 1–28 (MTRPSLVRCYSLFFTALIVMAIICPAWS) are cleaved as a signal peptide. Residues 29–34 (EEIPKS) constitute a propeptide that is removed on maturation. 3 disulfide bridges follow: Cys-88/Cys-119, Cys-95/Cys-114, and Cys-99/Cys-120.

The protein belongs to the big defensin family. Expressed in hemocytes.

The protein resides in the secreted. Functionally, significantly inhibits the growth of Gram-negative and Gram-positive bacteria and fungi in vitro. The chain is Big defensin from Argopecten irradians (Bay scallop).